A 347-amino-acid chain; its full sequence is Protein RecA (347 aa).

67-74 is an ATP binding site; the sequence is GPESSGKT.

It belongs to the RecA family.

It localises to the cytoplasm. Its function is as follows. Can catalyze the hydrolysis of ATP in the presence of single-stranded DNA, the ATP-dependent uptake of single-stranded DNA by duplex DNA, and the ATP-dependent hybridization of homologous single-stranded DNAs. It interacts with LexA causing its activation and leading to its autocatalytic cleavage. The polypeptide is Protein RecA (Paenarthrobacter aurescens (strain TC1)).